A 254-amino-acid polypeptide reads, in one-letter code: NAD kinase (254 aa).

The active-site Proton acceptor is the Asp-44. NAD(+) is bound by residues 44–45 (DG), 114–115 (NE), Asp-144, Ala-152, 155–160 (TAYNYS), and Ala-179.

This sequence belongs to the NAD kinase family. Requires a divalent metal cation as cofactor.

The protein resides in the cytoplasm. The catalysed reaction is NAD(+) + ATP = ADP + NADP(+) + H(+). Functionally, involved in the regulation of the intracellular balance of NAD and NADP, and is a key enzyme in the biosynthesis of NADP. Catalyzes specifically the phosphorylation on 2'-hydroxyl of the adenosine moiety of NAD to yield NADP. The chain is NAD kinase from Cereibacter sphaeroides (strain ATCC 17029 / ATH 2.4.9) (Rhodobacter sphaeroides).